A 592-amino-acid polypeptide reads, in one-letter code: Transducer of Cdc42-dependent actin assembly protein 1 homolog (592 aa).

Positions 3–267 (DSCSWDQLWD…DIGLIDPSRD (265 aa)) constitute an F-BAR domain. 2 disordered regions span residues 343–366 (FGGG…QQRA) and 447–519 (SATS…DELY). Residues 359 to 436 (TLPPQQRARK…IQKFKILLDD (78 aa)) form the REM-1 domain. The stretch at 363–441 (QQRARKIAGK…ILLDDVNAQL (79 aa)) forms a coiled coil. A compositionally biased stretch (polar residues) spans 447–457 (SATSVGGSDTP). Low complexity predominate over residues 459–474 (SIRSVSSASSGVTSRV). Residues 495–510 (FSGSNGGSDTDPTING) show a composition bias toward polar residues. In terms of domain architecture, SH3 spans 527–589 (PVLGEAIAQF…PSSYLKVTWF (63 aa)).

It belongs to the FNBP1 family. In terms of assembly, interacts (via SH3 domain) with wsp-1. Interacts with cdc-42 and (via SH3 domain) with wve-1. As to expression, expressed in the germline and specifically in the gonads.

The protein resides in the cell junction. The protein localises to the apical cell membrane. It is found in the basolateral cell membrane. Its subcellular location is the cytoplasmic vesicle. It localises to the cytoplasm. The protein resides in the perinuclear region. The protein localises to the recycling endosome. In terms of biological role, plays a role in protein trafficking, actin organization and embryonic morphogenesis. Potentially acts as a cdc-42 effector. May play a role in hypodermal P-cell nuclear positioning. Together with toca-2, is required for protein trafficking regulating yolk protein clathrin-mediated endocytosis by oocytes during oogenesis and retrograde recycling and the sorting of recycling endosome cargo proteins such as mig-14. Also, together with toca-2, controls the distribution of actin at cell junctions. This is Transducer of Cdc42-dependent actin assembly protein 1 homolog from Caenorhabditis elegans.